A 794-amino-acid chain; its full sequence is Transcription factor TOG1 (794 aa).

Positions 18, 21, 28, 34, 37, and 44 each coordinate Zn(2+). The zn(2)-C6 fungal-type DNA-binding region spans 18 to 44; it reads CDRCHRKKIKCNSKKPCFGCIGSQSKC.

It is found in the nucleus. In terms of biological role, transcriptional activator required for growth on non-fermentable carbon sources and that regulates genes involved in fatty acid utilization. Acts as a direct activator that binds the promoters of oleate utilizing genes, encoded key enzymes in beta-oxidation and NADPH regeneration (POX1, FOX2,POT1 and IDP2), the glyoxylate shunt (MLS1 and ICL1), and gluconeogenesis (PCK1 and FBP1). Also regulates the abundance of peroxisomes that are vital for fatty acid oxidation. The protein is Transcription factor TOG1 of Saccharomyces cerevisiae (strain ATCC 204508 / S288c) (Baker's yeast).